A 260-amino-acid chain; its full sequence is Ribonuclease HII (260 aa).

The 191-residue stretch at Q70–N260 folds into the RNase H type-2 domain. A divalent metal cation is bound by residues D76, E77, and D171.

This sequence belongs to the RNase HII family. It depends on Mn(2+) as a cofactor. The cofactor is Mg(2+).

The protein resides in the cytoplasm. The enzyme catalyses Endonucleolytic cleavage to 5'-phosphomonoester.. Endonuclease that specifically degrades the RNA of RNA-DNA hybrids. This Streptococcus mutans serotype c (strain ATCC 700610 / UA159) protein is Ribonuclease HII.